A 248-amino-acid chain; its full sequence is Phosphoadenosine 5'-phosphosulfate reductase (248 aa).

Cys-239 (nucleophile; cysteine thiosulfonate intermediate) is an active-site residue.

The protein belongs to the PAPS reductase family. CysH subfamily.

It localises to the cytoplasm. The enzyme catalyses [thioredoxin]-disulfide + sulfite + adenosine 3',5'-bisphosphate + 2 H(+) = [thioredoxin]-dithiol + 3'-phosphoadenylyl sulfate. The protein operates within sulfur metabolism; hydrogen sulfide biosynthesis; sulfite from sulfate: step 3/3. In terms of biological role, catalyzes the formation of sulfite from phosphoadenosine 5'-phosphosulfate (PAPS) using thioredoxin as an electron donor. The sequence is that of Phosphoadenosine 5'-phosphosulfate reductase from Alteromonas mediterranea (strain DSM 17117 / CIP 110805 / LMG 28347 / Deep ecotype).